The primary structure comprises 411 residues: Probable phosphatase HAD1 (411 aa).

Positions 14–23 (LPSPNTSQPP) are enriched in polar residues. The disordered stretch occupies residues 14 to 33 (LPSPNTSQPPSAAPSRRGSF). The active-site Nucleophile is the Asp61. Mg(2+)-binding residues include Asp61, Asp63, and Asp338. Asp63 acts as the Proton donor in catalysis. The tract at residues 296–386 (PRPTPDVTPV…QSGQAGVTLD (91 aa)) is disordered. A compositionally biased stretch (polar residues) spans 326 to 345 (VRNTQTIMKGSDDLTGNDSV). A compositionally biased stretch (basic and acidic residues) spans 362-373 (SVEKRAEMEFHR).

It belongs to the HAD-like hydrolase superfamily. Post-translationally, phosphorylated.

Functionally, probable phosphatase. Required for cell wall integrity and virulence. This chain is Probable phosphatase HAD1, found in Cryptococcus neoformans var. grubii serotype A (strain H99 / ATCC 208821 / CBS 10515 / FGSC 9487) (Filobasidiella neoformans var. grubii).